We begin with the raw amino-acid sequence, 205 residues long: Ribosomal RNA small subunit methyltransferase G (205 aa).

Residues Gly66, Phe71, 119-120, and Arg135 contribute to the S-adenosyl-L-methionine site; that span reads IE.

It belongs to the methyltransferase superfamily. RNA methyltransferase RsmG family.

It localises to the cytoplasm. The enzyme catalyses guanosine(527) in 16S rRNA + S-adenosyl-L-methionine = N(7)-methylguanosine(527) in 16S rRNA + S-adenosyl-L-homocysteine. Its function is as follows. Specifically methylates the N7 position of guanine in position 527 of 16S rRNA. In Rhizobium etli (strain CIAT 652), this protein is Ribosomal RNA small subunit methyltransferase G.